Here is a 276-residue protein sequence, read N- to C-terminus: Large ribosomal subunit protein uL2 (276 aa).

The disordered stretch occupies residues 219–276 (TVRGSVMNPNDHPHGGGEGKQPIGRKQQMTPWGKKARGIKTRDKKKASTSMIVRRRNG). The segment covering 252-276 (KKARGIKTRDKKKASTSMIVRRRNG) has biased composition (basic residues).

The protein belongs to the universal ribosomal protein uL2 family. Part of the 50S ribosomal subunit. Forms a bridge to the 30S subunit in the 70S ribosome.

Functionally, one of the primary rRNA binding proteins. Required for association of the 30S and 50S subunits to form the 70S ribosome, for tRNA binding and peptide bond formation. It has been suggested to have peptidyltransferase activity; this is somewhat controversial. Makes several contacts with the 16S rRNA in the 70S ribosome. This chain is Large ribosomal subunit protein uL2, found in Acholeplasma laidlawii (strain PG-8A).